Here is a 132-residue protein sequence, read N- to C-terminus: Small ribosomal subunit protein uS8 (132 aa).

This sequence belongs to the universal ribosomal protein uS8 family. As to quaternary structure, part of the 30S ribosomal subunit. Contacts proteins S5 and S12.

Its function is as follows. One of the primary rRNA binding proteins, it binds directly to 16S rRNA central domain where it helps coordinate assembly of the platform of the 30S subunit. This Corynebacterium jeikeium (strain K411) protein is Small ribosomal subunit protein uS8.